Here is a 594-residue protein sequence, read N- to C-terminus: MGKKSRVKTQKSGTGATATVSPKEILNLTSELLQKCSSPAPSPGKEWEEYTQIRALVEKIRKKQKGLSVTFDGKREDYFPDLMKWASENGASVEGFEMVNFKEEGFGLRATRDIKAEELFLWVPRKLLMTVESAKNSVLGPLYSQDRILQAMGNIALAFHLLCERASPNSFWQPYIQTLPSEYDTPLYFEEEEVRCLQSTQAIHDVFSQYKNTARQYAYFYKVIQTHPHANKLPLKESFTYEDYRWAVSSVMTRQNQIPTEDGSRVTLALIPLWDMCNHTNGLITTGYNLEDDRCECVALQDFQAGDQIYIFYGTRSNAEFVIHSGFFFDNNSHDRVKIKLGVSKSDRLYAMKAEVLARAGIPTSSVFALHSTEPPISAQLLAFLRVFCMTEEELKEHLLGDSAIDRIFTLGNAEFPVSWDNEVKLWTFLEDRASLLLKTYKTTIEEDKIVLKNPDLSVRATMAIKLRLGEKEILEKAVKSAAVNREYYRKHMEERAPLPRYEESDLGLLEGGVGDSRLPLVLRKLEEEAGVQESLSLTETVSKVKAAENGLVNGENLIPNGTRSENESLSPEESENVTGEESSGSMAKVKERL.

Residues 1 to 22 (MGKKSRVKTQKSGTGATATVSP) are disordered. Residues 10–20 (QKSGTGATATV) show a composition bias toward polar residues. Residues Arg-75, 104–106 (EGF), Arg-254, 275–279 (DMCNH), and 325–327 (SGF) contribute to the S-adenosyl-L-methionine site. The region spanning 94 to 314 (EGFEMVNFKE…AGDQIYIFYG (221 aa)) is the SET domain. Residues 551–594 (GLVNGENLIPNGTRSENESLSPEESENVTGEESSGSMAKVKERL) form a disordered region.

It belongs to the class V-like SAM-binding methyltransferase superfamily. SETD3 actin-histidine methyltransferase family. As to quaternary structure, interacts with MYOD1. Phosphorylated by GSK3B, which is required for recognition by the SCF(FBXW7) complex and subsequent degradation. In terms of processing, ubiquitinated by the SCF(FBXW7) complex following phosphorylation by GSK3B, leading to its degradation by the proteasome. As to expression, prominently expressed in the heart and skeletal muscles and is also detected weakly in the stomach, small intestine, and colon.

It is found in the cytoplasm. The protein localises to the nucleus. The catalysed reaction is L-histidyl-[protein] + S-adenosyl-L-methionine = N(tele)-methyl-L-histidyl-[protein] + S-adenosyl-L-homocysteine + H(+). Its function is as follows. Protein-histidine N-methyltransferase that specifically mediates 3-methylhistidine (tele-methylhistidine) methylation of actin at 'His-73'. Histidine methylation of actin is required for smooth muscle contraction of the laboring uterus during delivery. Does not have protein-lysine N-methyltransferase activity and probably only catalyzes histidine methylation of actin. The chain is Actin-histidine N-methyltransferase from Mus musculus (Mouse).